The sequence spans 445 residues: DNA repair protein RadA (445 aa).

Residues 10–27 (CSNCANISHKWSGQCFDC) form a C4-type zinc finger. An ATP-binding site is contributed by 90–97 (GEPGIGKS). A RadA KNRFG motif motif is present at residues 249 to 253 (KNRFG). Residues 348 to 445 (EIYLSIAGGL…HLQDLKEIIK (98 aa)) form a lon-protease-like region.

It belongs to the RecA family. RadA subfamily.

Its function is as follows. DNA-dependent ATPase involved in processing of recombination intermediates, plays a role in repairing DNA breaks. Stimulates the branch migration of RecA-mediated strand transfer reactions, allowing the 3' invading strand to extend heteroduplex DNA faster. Binds ssDNA in the presence of ADP but not other nucleotides, has ATPase activity that is stimulated by ssDNA and various branched DNA structures, but inhibited by SSB. Does not have RecA's homology-searching function. In Rickettsia typhi (strain ATCC VR-144 / Wilmington), this protein is DNA repair protein RadA.